A 316-amino-acid polypeptide reads, in one-letter code: Replication initiation protein (316 aa).

Belongs to the initiator RepB protein family.

This chain is Replication initiation protein (repA), found in Escherichia coli.